The sequence spans 27 residues: KIKWFKTMKSIAKFIAKEQMKKHLGGE.

In terms of tissue distribution, expressed by the venom gland.

It is found in the secreted. Functionally, forms pore that permeabilize the cell membrane. Promotes efflux of calcium from synaptosomes, causes hemolysis, and dissipates voltage gradients across muscle membrane. Potently inhibits the growth of bacteria, yeast and Leishmania. May function both in the prey capture strategy as well as protection from infectious organisms arising from prey ingestion. This is M-lycotoxin-Hc2a from Hogna carolinensis (Carolina wolf spider).